The following is a 346-amino-acid chain: Transcription termination factor 4, mitochondrial (346 aa).

The N-terminal 42 residues, 1 to 42 (MASLGRQVPEWHRLLALSWACLVRQTPHLREQKQMSPSLSCK), are a transit peptide targeting the mitochondrion. MTERF repeat units lie at residues 142-172 (FNAL…LGLG), 177-204 (KRVL…LREK), 209-239 (AQHI…YAYF), 245-270 (HLDI…YLER), and 290-318 (LRNI…VFKK). The interval 310–327 (VEEFQVFKKLLDQEEEEE) is dimerization with NSUN4. The tract at residues 321-346 (DQEEEEESESHASEEEEEEEEEEELL) is disordered. The segment covering 322–346 (QEEEEESESHASEEEEEEEEEEELL) has biased composition (acidic residues).

Belongs to the mTERF family. Heterodimer with NSUN4; this interaction may be required for NSUN4 recruitment to the mitochondrial large ribosomal subunit. Widely expressed, with highest levels in liver, followed by testis, kidney and brain.

It localises to the mitochondrion. Regulator of mitochondrial ribosome biogenesis and translation. Binds to mitochondrial ribosomal RNAs 16S, 12S and 7S. Targets NSUN4 RNA methyltransferase to the mitochondrial large ribosomal subunit. This Mus musculus (Mouse) protein is Transcription termination factor 4, mitochondrial (Mterf4).